The chain runs to 281 residues: Homeobox protein Hox-A5 (281 aa).

Disordered regions lie at residues 65-144 (VGNE…PCSS) and 162-183 (PLEE…SDST). Composition is skewed to polar residues over residues 68–99 (ERTQ…STGT) and 114–127 (VASS…QSQH). Low complexity predominate over residues 132–144 (NSITTPCSTPCSS). The span at 172-183 (APTTPQNVSDST) shows a compositional bias: polar residues. An Antp-type hexapeptide motif is present at residues 187-192 (IYPWMR). Residues 205-264 (GKRARTAYTRYQTLELEKEFHFNRYLTRRRRIEIAHALCLSERQIKIWFQNRRMKWKKDN) constitute a DNA-binding region (homeobox).

Belongs to the Antp homeobox family.

The protein resides in the nucleus. In terms of biological role, sequence-specific transcription factor which is part of a developmental regulatory system that provides cells with specific positional identities on the anterior-posterior axis. This chain is Homeobox protein Hox-A5 (hoxa5), found in Morone saxatilis (Striped bass).